Here is a 341-residue protein sequence, read N- to C-terminus: N-acetyl-gamma-glutamyl-phosphate reductase 2 (341 aa).

Residue cysteine 146 is part of the active site.

It belongs to the NAGSA dehydrogenase family. Type 1 subfamily.

It localises to the cytoplasm. The enzyme catalyses N-acetyl-L-glutamate 5-semialdehyde + phosphate + NADP(+) = N-acetyl-L-glutamyl 5-phosphate + NADPH + H(+). It participates in amino-acid biosynthesis; L-arginine biosynthesis; N(2)-acetyl-L-ornithine from L-glutamate: step 3/4. Its function is as follows. Catalyzes the NADPH-dependent reduction of N-acetyl-5-glutamyl phosphate to yield N-acetyl-L-glutamate 5-semialdehyde. This Lactiplantibacillus plantarum (strain ATCC BAA-793 / NCIMB 8826 / WCFS1) (Lactobacillus plantarum) protein is N-acetyl-gamma-glutamyl-phosphate reductase 2.